A 242-amino-acid polypeptide reads, in one-letter code: tRNA (guanine-N(1)-)-methyltransferase (242 aa).

Residues glycine 114 and 134–139 each bind S-adenosyl-L-methionine; that span reads IGDFVL. The span at 223–233 shows a compositional bias: basic and acidic residues; the sequence is RRDLLPEHSKN. Residues 223–242 form a disordered region; that stretch reads RRDLLPEHSKNNPEQTNKLS.

It belongs to the RNA methyltransferase TrmD family. Homodimer.

It localises to the cytoplasm. The catalysed reaction is guanosine(37) in tRNA + S-adenosyl-L-methionine = N(1)-methylguanosine(37) in tRNA + S-adenosyl-L-homocysteine + H(+). Its function is as follows. Specifically methylates guanosine-37 in various tRNAs. The polypeptide is tRNA (guanine-N(1)-)-methyltransferase (Rhodopirellula baltica (strain DSM 10527 / NCIMB 13988 / SH1)).